The chain runs to 56 residues: Small ribosomal subunit protein uS14 (56 aa).

Residues cysteine 21, cysteine 24, cysteine 39, and cysteine 42 each coordinate Zn(2+).

The protein belongs to the universal ribosomal protein uS14 family. In terms of assembly, component of the 40S small ribosomal subunit. Zn(2+) is required as a cofactor.

The protein resides in the cytoplasm. It localises to the cytosol. It is found in the rough endoplasmic reticulum. The chain is Small ribosomal subunit protein uS14 (RpS29) from Bombyx mori (Silk moth).